The sequence spans 131 residues: Large ribosomal subunit protein bL17 (131 aa).

Belongs to the bacterial ribosomal protein bL17 family. As to quaternary structure, part of the 50S ribosomal subunit. Contacts protein L32.

The chain is Large ribosomal subunit protein bL17 from Thermotoga neapolitana (strain ATCC 49049 / DSM 4359 / NBRC 107923 / NS-E).